We begin with the raw amino-acid sequence, 255 residues long: Proteasome subunit alpha (255 aa).

The tract at residues 228-255 (LLASPAGTSGPTGEPGPAGTAATDGGDL) is disordered. Over residues 232–255 (PAGTSGPTGEPGPAGTAATDGGDL) the composition is skewed to low complexity.

It belongs to the peptidase T1A family. As to quaternary structure, the 20S proteasome core is composed of 14 alpha and 14 beta subunits that assemble into four stacked heptameric rings, resulting in a barrel-shaped structure. The two inner rings, each composed of seven catalytic beta subunits, are sandwiched by two outer rings, each composed of seven alpha subunits. The catalytic chamber with the active sites is on the inside of the barrel. Has a gated structure, the ends of the cylinder being occluded by the N-termini of the alpha-subunits. Is capped by the proteasome-associated ATPase, ARC.

The protein localises to the cytoplasm. The protein operates within protein degradation; proteasomal Pup-dependent pathway. Its activity is regulated as follows. The formation of the proteasomal ATPase ARC-20S proteasome complex, likely via the docking of the C-termini of ARC into the intersubunit pockets in the alpha-rings, may trigger opening of the gate for substrate entry. Interconversion between the open-gate and close-gate conformations leads to a dynamic regulation of the 20S proteasome proteolysis activity. Its function is as follows. Component of the proteasome core, a large protease complex with broad specificity involved in protein degradation. This is Proteasome subunit alpha from Sanguibacter keddieii (strain ATCC 51767 / DSM 10542 / NCFB 3025 / ST-74).